Consider the following 151-residue polypeptide: Small ribosomal subunit protein uS15y (151 aa).

Belongs to the universal ribosomal protein uS15 family.

This Oryza sativa subsp. japonica (Rice) protein is Small ribosomal subunit protein uS15y.